The primary structure comprises 651 residues: Probable potassium transport system protein Kup (651 aa).

Helical transmembrane passes span 41–61, 82–102, 130–150, 163–183, 194–214, 235–255, 276–296, 309–329, 366–386, 395–415, 426–446, and 450–470; these read LVLGALGVVYGDIGTSPIYAF, VVSLIFWALTLVVTVKYVLFV, LILGVGICGAALFFGDAVITP, IVAPNLTPFVVPATVVILVTL, VAIVFGPIMALWFVALGASGL, FLTVSPAVAFVTVGAVFLAMT, WLWIVFPCLLLNYFGQAAFIL, MIPSFALWPMVLLATAATVIA, IYIPRVNLLLGLAVVILVLGF, AYGIAVTGNMLVTTVLLYIVM, ALPIILGFLVIDMLFFSANII, and EGGWASIGIATVLVLIMWTWV.

This sequence belongs to the HAK/KUP transporter (TC 2.A.72) family.

The protein resides in the cell inner membrane. It carries out the reaction K(+)(in) + H(+)(in) = K(+)(out) + H(+)(out). Functionally, transport of potassium into the cell. Likely operates as a K(+):H(+) symporter. This Brucella canis (strain ATCC 23365 / NCTC 10854 / RM-666) protein is Probable potassium transport system protein Kup.